The following is a 300-amino-acid chain: Ubiquinone biosynthesis protein COQ4, mitochondrial (300 aa).

The Zn(2+) site is built by H173, D174, H177, and E189.

This sequence belongs to the COQ4 family. As to quaternary structure, component of a multi-subunit COQ enzyme complex, composed of at least COQ3, COQ4, COQ5, COQ6, COQ7 and COQ9. Requires Zn(2+) as cofactor.

The protein resides in the mitochondrion inner membrane. The enzyme catalyses a 4-hydroxy-3-methoxy-5-(all-trans-polyprenyl)benzoate + H(+) = a 2-methoxy-6-(all-trans-polyprenyl)phenol + CO2. The protein operates within cofactor biosynthesis; ubiquinone biosynthesis. Functionally, lyase that catalyzes the C1-decarboxylation of 4-hydroxy-3-methoxy-5-(all-trans-polyprenyl)benzoic acid into 2-methoxy-6-(all-trans-polyprenyl)phenol during ubiquinone biosynthesis. The sequence is that of Ubiquinone biosynthesis protein COQ4, mitochondrial from Cryptococcus neoformans var. neoformans serotype D (strain B-3501A) (Filobasidiella neoformans).